We begin with the raw amino-acid sequence, 417 residues long: Cobalamin binding intrinsic factor (417 aa).

The signal sequence occupies residues Met-1 to Thr-18. 3 cysteine pairs are disulfide-bonded: Cys-26-Cys-246, Cys-103-Cys-288, and Cys-143-Cys-182. Asp-171 serves as a coordination point for cob(II)alamin. At Ser-191 the chain carries Phosphoserine. Asp-222 and Gln-270 together coordinate cob(II)alamin. Residues Asn-311, Asn-330, and Asn-334 are each glycosylated (N-linked (GlcNAc...) asparagine). Cob(II)alamin contacts are provided by residues Ser-365 to Val-370 and Trp-386 to Leu-395. Asn-413 carries N-linked (GlcNAc...) asparagine glycosylation.

The protein belongs to the eukaryotic cobalamin transport proteins family. As to quaternary structure, interacts with CUBN (via CUB domains). In terms of tissue distribution, gastric mucosa.

It localises to the secreted. In terms of biological role, promotes absorption of the essential vitamin cobalamin (Cbl) in the ileum. After interaction with CUBN, the CBLIF-cobalamin complex is internalized via receptor-mediated endocytosis. This is Cobalamin binding intrinsic factor from Homo sapiens (Human).